The following is a 113-amino-acid chain: Transmembrane protein 256 (113 aa).

The signal sequence occupies residues 1-29 (MAGPAAAFRRLGALSGAAALGFASYGAHG). Over 30–63 (AQFPDAYGKELFDKANKHHFLHSLALLGVPHCRK) the chain is Extracellular. An N6-acetyllysine modification is found at Lys-43. The helical transmembrane segment at 64–84 (PLWAGLLLASGTTLFCTSFYY) threads the bilayer. The Cytoplasmic portion of the chain corresponds to 85 to 92 (QALSGDPS). Residues 93–113 (IQTLAPAGGTLLLLGWLALAL) form a helical membrane-spanning segment.

Belongs to the TMEM256 family.

Its subcellular location is the membrane. This Homo sapiens (Human) protein is Transmembrane protein 256 (TMEM256).